A 373-amino-acid polypeptide reads, in one-letter code: tRNA (guanine(26)-N(2))-dimethyltransferase (373 aa).

One can recognise a Trm1 methyltransferase domain in the interval K2–I365. R35, R66, D86, D113, and A114 together coordinate S-adenosyl-L-methionine.

Belongs to the class I-like SAM-binding methyltransferase superfamily. Trm1 family.

It carries out the reaction guanosine(26) in tRNA + 2 S-adenosyl-L-methionine = N(2)-dimethylguanosine(26) in tRNA + 2 S-adenosyl-L-homocysteine + 2 H(+). In terms of biological role, dimethylates a single guanine residue at position 26 of a number of tRNAs using S-adenosyl-L-methionine as donor of the methyl groups. In Methanococcus maripaludis (strain C5 / ATCC BAA-1333), this protein is tRNA (guanine(26)-N(2))-dimethyltransferase.